The following is a 274-amino-acid chain: Large ribosomal subunit protein uL2 (274 aa).

The disordered stretch occupies residues 224-256 (VMNPVDHPHGGGEGKTGEGRHPVDPWGNLTKGY). Positions 229–246 (DHPHGGGEGKTGEGRHPV) are enriched in basic and acidic residues.

Belongs to the universal ribosomal protein uL2 family. Part of the 50S ribosomal subunit. Forms a bridge to the 30S subunit in the 70S ribosome.

In terms of biological role, one of the primary rRNA binding proteins. Required for association of the 30S and 50S subunits to form the 70S ribosome, for tRNA binding and peptide bond formation. It has been suggested to have peptidyltransferase activity; this is somewhat controversial. Makes several contacts with the 16S rRNA in the 70S ribosome. The chain is Large ribosomal subunit protein uL2 from Polaromonas naphthalenivorans (strain CJ2).